A 199-amino-acid chain; its full sequence is COMM domain-containing protein 2 (199 aa).

In terms of domain architecture, COMM spans 123–190 (SYHNLEWRLD…QALEEMKTNH (68 aa)).

Belongs to the COMM domain-containing protein 2 family. In terms of assembly, component of the commander complex consisting of the CCC subcomplex and the retriever subcomplex. Component of the CCC (COMMD/CCDC22/CCDC93) subcomplex consisting of COMMD1, COMMD2, COMMD3, COMMD4, COMMD5, COMMD6, COMMD7, COMMD8, COMMD9, COMMD10, CCDC22 and CCDC93; within the complex forms a heterodimer with COMMD3. Interacts with RELA, RELB, NFKB1/p105, NFKB2/p100. Interacts with CCDC22, CCDC93, SCNN1B, CUL3, CUL4B, CUL5, CUL7.

It is found in the cytoplasm. Scaffold protein in the commander complex that is essential for endosomal recycling of transmembrane cargos; the commander complex is composed of the CCC subcomplex and the retriever subcomplex. May modulate activity of cullin-RING E3 ubiquitin ligase (CRL) complexes. May down-regulate activation of NF-kappa-B. This is COMM domain-containing protein 2 (COMMD2) from Pongo abelii (Sumatran orangutan).